The primary structure comprises 213 residues: uncharacterized protein (213 aa).

The span at M1–N11 shows a compositional bias: basic and acidic residues. Disordered stretches follow at residues M1–N21 and L63–W98. A compositionally biased stretch (polar residues) spans R12–N21. Over residues L63–Q93 the composition is skewed to basic and acidic residues.

This is an uncharacterized protein from Escherichia coli (strain K12).